The following is a 475-amino-acid chain: Aspartyl/glutamyl-tRNA(Asn/Gln) amidotransferase subunit B (475 aa).

Belongs to the GatB/GatE family. GatB subfamily. As to quaternary structure, heterotrimer of A, B and C subunits.

The enzyme catalyses L-glutamyl-tRNA(Gln) + L-glutamine + ATP + H2O = L-glutaminyl-tRNA(Gln) + L-glutamate + ADP + phosphate + H(+). It carries out the reaction L-aspartyl-tRNA(Asn) + L-glutamine + ATP + H2O = L-asparaginyl-tRNA(Asn) + L-glutamate + ADP + phosphate + 2 H(+). Its function is as follows. Allows the formation of correctly charged Asn-tRNA(Asn) or Gln-tRNA(Gln) through the transamidation of misacylated Asp-tRNA(Asn) or Glu-tRNA(Gln) in organisms which lack either or both of asparaginyl-tRNA or glutaminyl-tRNA synthetases. The reaction takes place in the presence of glutamine and ATP through an activated phospho-Asp-tRNA(Asn) or phospho-Glu-tRNA(Gln). This Thermoanaerobacter sp. (strain X514) protein is Aspartyl/glutamyl-tRNA(Asn/Gln) amidotransferase subunit B.